The following is a 309-amino-acid chain: Nudix hydrolase 14, chloroplastic (309 aa).

Residues 1–60 (MAGFTLLPSRLLAFPSRALPRRLHHHHAKLILRCKMSSSSSSLTQSITLPSQPNEPVLVS) constitute a chloroplast transit peptide. The Nudix hydrolase domain maps to 139–292 (ARGPAVAVLI…KVLMSIGLYE (154 aa)). Residues 179–200 (MLDDDKGDFVGTAVREVEEEIG) carry the Nudix box motif. Mg(2+) contacts are provided by Glu-194 and Glu-198.

This sequence belongs to the Nudix hydrolase family. As to quaternary structure, homodimer. Mg(2+) serves as cofactor. Requires Mn(2+) as cofactor. As to expression, expressed in roots, leaves, stems and inflorescences.

The protein resides in the plastid. It is found in the chloroplast. The catalysed reaction is ADP-sugar + H2O = AMP + alpha-D-aldose 1-phosphate.. Its function is as follows. Mediates the hydrolysis of some nucleoside diphosphate derivatives. Can use ADP-glucose, ADP-mannose and ADP-ribose as substrates. Regulates the intracellular ADP-glucose levels linked to starch biosynthesis. The chain is Nudix hydrolase 14, chloroplastic (NUDT14) from Arabidopsis thaliana (Mouse-ear cress).